The sequence spans 156 residues: Small ribosomal subunit protein uS7 (156 aa).

The protein belongs to the universal ribosomal protein uS7 family. Part of the 30S ribosomal subunit. Contacts proteins S9 and S11.

One of the primary rRNA binding proteins, it binds directly to 16S rRNA where it nucleates assembly of the head domain of the 30S subunit. Is located at the subunit interface close to the decoding center, probably blocks exit of the E-site tRNA. The polypeptide is Small ribosomal subunit protein uS7 (Streptomyces griseus subsp. griseus (strain JCM 4626 / CBS 651.72 / NBRC 13350 / KCC S-0626 / ISP 5235)).